The sequence spans 329 residues: o-succinylbenzoate synthase (329 aa).

Lysine 140 functions as the Proton donor in the catalytic mechanism. Mg(2+)-binding residues include aspartate 168, glutamate 197, and aspartate 220. Lysine 242 serves as the catalytic Proton acceptor.

It belongs to the mandelate racemase/muconate lactonizing enzyme family. MenC type 1 subfamily. The cofactor is a divalent metal cation.

The catalysed reaction is (1R,6R)-6-hydroxy-2-succinyl-cyclohexa-2,4-diene-1-carboxylate = 2-succinylbenzoate + H2O. It participates in quinol/quinone metabolism; 1,4-dihydroxy-2-naphthoate biosynthesis; 1,4-dihydroxy-2-naphthoate from chorismate: step 4/7. Its pathway is quinol/quinone metabolism; menaquinone biosynthesis. Converts 2-succinyl-6-hydroxy-2,4-cyclohexadiene-1-carboxylate (SHCHC) to 2-succinylbenzoate (OSB). The protein is o-succinylbenzoate synthase of Haemophilus influenzae (strain ATCC 51907 / DSM 11121 / KW20 / Rd).